Consider the following 137-residue polypeptide: Proofreading thioesterase EntH (137 aa).

E63 serves as the catalytic Nucleophile or proton acceptor.

The protein belongs to the thioesterase PaaI family. Homotetramer. Dimer of dimers. Interacts specifically with the aryl carrier protein (ArCP) domain of EntB.

The protein resides in the cytoplasm. It participates in siderophore biosynthesis; enterobactin biosynthesis. Required for optimal enterobactin synthesis. Acts as a proofreading enzyme that prevents EntB misacylation by hydrolyzing the thioester bound existing between EntB and wrongly charged molecules. This chain is Proofreading thioesterase EntH, found in Escherichia coli O157:H7 (strain EC4115 / EHEC).